Here is a 360-residue protein sequence, read N- to C-terminus: Isopentenyl-diphosphate delta-isomerase (360 aa).

12–13 (RK) serves as a coordination point for substrate. Residues 69–71 (SMT), Ser-99, and Asn-130 contribute to the FMN site. 99-101 (SQR) serves as a coordination point for substrate. Substrate is bound at residue Gln-164. Glu-165 lines the Mg(2+) pocket. FMN is bound by residues Lys-196, Thr-226, 277–279 (GVR), and 298–299 (AK).

The protein belongs to the IPP isomerase type 2 family. As to quaternary structure, homooctamer. Dimer of tetramers. It depends on FMN as a cofactor. The cofactor is NADPH. Mg(2+) is required as a cofactor.

It is found in the cytoplasm. It catalyses the reaction isopentenyl diphosphate = dimethylallyl diphosphate. Its function is as follows. Involved in the biosynthesis of isoprenoids. Catalyzes the 1,3-allylic rearrangement of the homoallylic substrate isopentenyl (IPP) to its allylic isomer, dimethylallyl diphosphate (DMAPP). The chain is Isopentenyl-diphosphate delta-isomerase from Halobacterium salinarum (strain ATCC 700922 / JCM 11081 / NRC-1) (Halobacterium halobium).